Reading from the N-terminus, the 341-residue chain is Arfaptin-2 (341 aa).

The disordered stretch occupies residues 46–85 (NETSIVSGGYGGSGDGLIPTGSGRHPSHSTTPSGPGDEVA). Position 72 is a phosphoserine (Ser-72). Phosphothreonine is present on Thr-76. The 201-residue stretch at 121 to 321 (TVDLELELQI…NQKQLEQTLQ (201 aa)) folds into the AH domain.

As to quaternary structure, forms homodimers or heterodimers with ARFIP1. Interacts with RAC1. Specifically binds to GTP-bound ARF1 and ARF6, but binds to RAC1.GTP and RAC1.GDP with similar affinities. Interacts with ARL1. Interacts (via N-terminus) with IKBKB and IKBKG; these interactions inhibit activation of NF-kappa-B.

It is found in the golgi apparatus. Its subcellular location is the trans-Golgi network membrane. Plays a role in constitutive metalloproteinase (MMP) secretion from the trans Golgi network. May have important functions during vesicle biogenesis at certain cargo subdomains, which could be predominantly utilized by secreted MMPs, such as MMP7 and MMP2. Also involved in autophagy by regulating the starvation-dependent trafficking of ATG9A vesicles which deliver the phosphatidylinositol 4-kinase beta (PI4KB) to the autophagosome initiation site. Involved in phagophore growth during mitophagy by regulating ATG9A trafficking to mitochondria. In addition, plays a role in NF-kappa-B inhibition by interacting with IKBKB and IKBKG. This chain is Arfaptin-2, found in Homo sapiens (Human).